The following is a 312-amino-acid chain: Ribosomal RNA small subunit methyltransferase H (312 aa).

S-adenosyl-L-methionine is bound by residues 35–37 (GGH), Asp-55, Phe-79, Asp-100, and Gln-107. A disordered region spans residues 279–312 (LVGKSQRPGPGEVAANPRSRSAVMRVAERTGGAA).

Belongs to the methyltransferase superfamily. RsmH family.

The protein resides in the cytoplasm. The catalysed reaction is cytidine(1402) in 16S rRNA + S-adenosyl-L-methionine = N(4)-methylcytidine(1402) in 16S rRNA + S-adenosyl-L-homocysteine + H(+). Its function is as follows. Specifically methylates the N4 position of cytidine in position 1402 (C1402) of 16S rRNA. This Aromatoleum aromaticum (strain DSM 19018 / LMG 30748 / EbN1) (Azoarcus sp. (strain EbN1)) protein is Ribosomal RNA small subunit methyltransferase H.